Here is a 336-residue protein sequence, read N- to C-terminus: Galectin-12 (336 aa).

Galectin domains lie at 49 to 183 (YVTT…VGFL) and 212 to 336 (CSHA…CVHS).

Not widely expressed. Predominantly expressed in adipose tissue.

The protein localises to the nucleus. Functionally, binds lactose. May participate in the apoptosis of adipocytes. The chain is Galectin-12 (LGALS12) from Homo sapiens (Human).